The following is a 318-amino-acid chain: 1-aminocyclopropane-1-carboxylate oxidase (318 aa).

The Fe2OG dioxygenase domain maps to 153–253 (PNFGTKVANY…RMSIASFYNP (101 aa)). 3 residues coordinate Fe cation: histidine 177, aspartate 179, and histidine 234.

It belongs to the iron/ascorbate-dependent oxidoreductase family. Fe cation is required as a cofactor.

It carries out the reaction 1-aminocyclopropane-1-carboxylate + L-ascorbate + O2 = ethene + L-dehydroascorbate + hydrogen cyanide + CO2 + 2 H2O. It participates in alkene biosynthesis; ethylene biosynthesis via S-adenosyl-L-methionine; ethylene from S-adenosyl-L-methionine: step 2/2. The sequence is that of 1-aminocyclopropane-1-carboxylate oxidase (DK-ACO1) from Diospyros kaki (Kaki persimmon).